We begin with the raw amino-acid sequence, 128 residues long: Arginine decarboxylase proenzyme (128 aa).

The active-site Schiff-base intermediate with substrate; via pyruvic acid is serine 76. Serine 76 is modified (pyruvic acid (Ser); by autocatalysis). Histidine 81 serves as the catalytic Proton acceptor; for processing activity. The active-site Proton donor; for catalytic activity is cysteine 96.

Belongs to the prokaryotic AdoMetDC family. Type 1 subfamily. In terms of assembly, heterooctamer of four alpha and four beta chains arranged as a tetramer of alpha/beta heterodimers. Pyruvate is required as a cofactor. In terms of processing, is synthesized initially as an inactive proenzyme. Formation of the active enzyme involves a self-maturation process in which the active site pyruvoyl group is generated from an internal serine residue via an autocatalytic post-translational modification. Two non-identical subunits are generated from the proenzyme in this reaction, and the pyruvate is formed at the N-terminus of the alpha chain, which is derived from the carboxyl end of the proenzyme. The post-translation cleavage follows an unusual pathway, termed non-hydrolytic serinolysis, in which the side chain hydroxyl group of the serine supplies its oxygen atom to form the C-terminus of the beta chain, while the remainder of the serine residue undergoes an oxidative deamination to produce ammonia and the pyruvoyl group blocking the N-terminus of the alpha chain.

The enzyme catalyses L-arginine + H(+) = agmatine + CO2. It functions in the pathway amine and polyamine biosynthesis; agmatine biosynthesis; agmatine from L-arginine: step 1/1. Specifically catalyzes the decarboxylation of L-arginine to agmatine. Has no S-adenosylmethionine decarboxylase (AdoMetDC) activity. The sequence is that of Arginine decarboxylase proenzyme from Sulfurisphaera tokodaii (strain DSM 16993 / JCM 10545 / NBRC 100140 / 7) (Sulfolobus tokodaii).